The primary structure comprises 427 residues: Adenylosuccinate synthetase (427 aa).

GTP is bound by residues 12–18 and 40–42; these read GDEGKGK and GHT. Residue aspartate 13 is the Proton acceptor of the active site. Residues aspartate 13 and glycine 40 each coordinate Mg(2+). IMP contacts are provided by residues 13–16, 38–41, threonine 128, arginine 142, glutamine 223, threonine 238, and arginine 302; these read DEGK and NAGH. Histidine 41 serves as the catalytic Proton donor. 298-304 lines the substrate pocket; that stretch reads TTTGRNR. GTP-binding positions include arginine 304, 330–332, and 412–414; these read KLD and GVG.

Belongs to the adenylosuccinate synthetase family. In terms of assembly, homodimer. Mg(2+) serves as cofactor.

Its subcellular location is the cytoplasm. It carries out the reaction IMP + L-aspartate + GTP = N(6)-(1,2-dicarboxyethyl)-AMP + GDP + phosphate + 2 H(+). The protein operates within purine metabolism; AMP biosynthesis via de novo pathway; AMP from IMP: step 1/2. Its function is as follows. Plays an important role in the de novo pathway of purine nucleotide biosynthesis. Catalyzes the first committed step in the biosynthesis of AMP from IMP. The protein is Adenylosuccinate synthetase of Thermobifida fusca (strain YX).